Reading from the N-terminus, the 555-residue chain is Potassium-transporting ATPase potassium-binding subunit (555 aa).

10 helical membrane passes run 2 to 22 (IWVAVVITMLLFILVAKPTGI), 60 to 80 (QYALSLVLLNGFMIVVVYFIF), 130 to 150 (IGITFLMFAAPATTLALVMAF), 173 to 193 (VFLPITFMAALVFVALGVPQT), 246 to 266 (MSNILQMMLMMLLPTALPFTY), 278 to 298 (ILFVSLFMVFLLGFITITTSE), 374 to 394 (AGFVNIIMYAIIAVFISGLMV), 412 to 432 (LIAVTILFHPLLILGFSALAL), 483 to 503 (LVMFLGRYFSLITMLAVAASL), and 525 to 545 (GIFIGTIVIVGALTFFPMLVL).

Belongs to the KdpA family. The system is composed of three essential subunits: KdpA, KdpB and KdpC.

It is found in the cell membrane. In terms of biological role, part of the high-affinity ATP-driven potassium transport (or Kdp) system, which catalyzes the hydrolysis of ATP coupled with the electrogenic transport of potassium into the cytoplasm. This subunit binds the extracellular potassium ions and delivers the ions to the membrane domain of KdpB through an intramembrane tunnel. The chain is Potassium-transporting ATPase potassium-binding subunit from Bacillus cereus (strain AH187).